A 456-amino-acid chain; its full sequence is N(6)-adenosine-methyltransferase non-catalytic subunit METTL14 (456 aa).

The segment at 50 to 75 is disordered; that stretch reads TCRASYDTSAPNAKRKYLDEGETDED. 2 interaction with METTL3 regions span residues 135 to 136 and 237 to 238; these read RD and SG. Residues 245 to 254 form a positively charged region required for RNA-binding region; the sequence is RVCLRKWGYR. 2 interaction with METTL3 regions span residues 255–258 and 278–287; these read RCED and KAVFQRTKEH. The positively charged region required for RNA-binding stretch occupies residues 297–298; sequence KR. An interaction with METTL3 region spans residues 308-312; sequence NVDID. Residues 393-456 are disordered; sequence ERLRPKSPPP…GAHRGGFPPR (64 aa). Ser-399 bears the Phosphoserine mark. Positions 409–423 are enriched in gly residues; sequence GGGAPRGGGRGGTSA. Residues 425–440 are compositionally biased toward basic and acidic residues; the sequence is RGRERNRSNFRGERGG. A compositionally biased stretch (gly residues) spans 441–450; it reads FRGGRGGAHR.

Belongs to the MT-A70-like family. Heterodimer; heterodimerizes with METTL3 to form an antiparallel heterodimer that constitutes an active methyltransferase. Component of the WMM complex, a N6-methyltransferase complex composed of a catalytic subcomplex, named MAC, and of an associated subcomplex, named MACOM. The MAC subcomplex is composed of METTL3 and METTL14. The MACOM subcomplex is composed of WTAP, ZC3H13, CBLL1/HAKAI, VIRMA, and, in some cases of RBM15 (RBM15 or RBM15B).

It is found in the nucleus. Functionally, the METTL3-METTL14 heterodimer forms a N6-methyltransferase complex that methylates adenosine residues at the N(6) position of some mRNAs and regulates the circadian clock, differentiation of embryonic stem cells and cortical neurogenesis. In the heterodimer formed with METTL3, METTL14 constitutes the RNA-binding scaffold that recognizes the substrate rather than the catalytic core. N6-methyladenosine (m6A), which takes place at the 5'-[AG]GAC-3' consensus sites of some mRNAs, plays a role in mRNA stability and processing. M6A acts as a key regulator of mRNA stability by promoting mRNA destabilization and degradation. In embryonic stem cells (ESCs), m6A methylation of mRNAs encoding key naive pluripotency-promoting transcripts results in transcript destabilization. M6A regulates spermatogonial differentiation and meiosis and is essential for male fertility and spermatogenesis. M6A also regulates cortical neurogenesis: m6A methylation of transcripts related to transcription factors, neural stem cells, the cell cycle and neuronal differentiation during brain development promotes their destabilization and decay, promoting differentiation of radial glial cells. The sequence is that of N(6)-adenosine-methyltransferase non-catalytic subunit METTL14 from Homo sapiens (Human).